The following is a 164-amino-acid chain: MVDLNDKVIRGYLLSLVGEDGLQMIEKMPEGEVTDEEIAAKTEVLLNTVRRTLFILNENKFAICRRERDSNSGWLTYLWRLDFSDIEHQLMKEKKKLLRNLKTRLEFEENNVFYMCPQGCVRLLFDEATETEFLCPMCGEDLVFYDNSHFIDVLRKRVDALSSA.

In terms of domain architecture, HTH TFE/IIEalpha-type spans asparagine 5 to glutamate 87.

It belongs to the TFE family. As to quaternary structure, monomer. Interaction with RNA polymerase subunits RpoF and RpoE is necessary for Tfe stimulatory transcription activity. Able to interact with Tbp and RNA polymerase in the absence of DNA promoter. Interacts both with the preinitiation and elongation complexes.

Its function is as follows. Transcription factor that plays a role in the activation of archaeal genes transcribed by RNA polymerase. Facilitates transcription initiation by enhancing TATA-box recognition by TATA-box-binding protein (Tbp), and transcription factor B (Tfb) and RNA polymerase recruitment. Not absolutely required for transcription in vitro, but particularly important in cases where Tbp or Tfb function is not optimal. It dynamically alters the nucleic acid-binding properties of RNA polymerases by stabilizing the initiation complex and destabilizing elongation complexes. Seems to translocate with the RNA polymerase following initiation and acts by binding to the non template strand of the transcription bubble in elongation complexes. This Methanosarcina barkeri (strain Fusaro / DSM 804) protein is Transcription factor E.